A 506-amino-acid chain; its full sequence is Protein MGF 505-9R (506 aa).

ANK repeat units follow at residues 54-83 (PTHKAVQIAASEGNEDIVKLFLLWKGSLQY), 253-283 (QVDTVLFQAVKYNHRKILAHFIHEIPRETVE), and 313-343 (FVKKLLHAVVKHKYMLIIKLLLERPKKKINL).

Belongs to the asfivirus MGF 505 family.

In terms of biological role, plays a role in virus cell tropism, and may be required for efficient virus replication in macrophages. In Ornithodoros (relapsing fever ticks), this protein is Protein MGF 505-9R.